The primary structure comprises 1141 residues: Tetratricopeptide repeat protein 17 (1141 aa).

The stretch at 295-328 is one TPR 1 repeat; the sequence is FTSYYTLGNIYAMLGEYNHSVLCYDHALQARPGF. Residues 340–382 are a coiled coil; that stretch reads CQQKLEQKLEAQHRSLQRTLNELKEYQKQHDHYLRQQEILEKH. 5 TPR repeats span residues 619–652, 689–722, 1014–1048, 1051–1084, and 1085–1118; these read WLIL…APLQ, PLTF…TTKC, SWVL…APHQ, DVPL…APHF, and AVNH…QPEF.

The protein belongs to the TTC17 family. As to quaternary structure, interacts with CATIP. In terms of tissue distribution, expressed in germ cells as well as in somatic cells of the testis (at protein level).

It localises to the cytoplasm. Its subcellular location is the cell membrane. The protein resides in the cytoskeleton. In terms of biological role, plays a role in primary ciliogenesis by modulating actin polymerization. This chain is Tetratricopeptide repeat protein 17 (TTC17), found in Homo sapiens (Human).